The sequence spans 133 residues: Ribonuclease P protein component (133 aa).

This sequence belongs to the RnpA family. As to quaternary structure, consists of a catalytic RNA component (M1 or rnpB) and a protein subunit.

The enzyme catalyses Endonucleolytic cleavage of RNA, removing 5'-extranucleotides from tRNA precursor.. Its function is as follows. RNaseP catalyzes the removal of the 5'-leader sequence from pre-tRNA to produce the mature 5'-terminus. It can also cleave other RNA substrates such as 4.5S RNA. The protein component plays an auxiliary but essential role in vivo by binding to the 5'-leader sequence and broadening the substrate specificity of the ribozyme. This Pseudomonas entomophila (strain L48) protein is Ribonuclease P protein component.